A 206-amino-acid chain; its full sequence is Glycerol-3-phosphate acyltransferase (206 aa).

6 consecutive transmembrane segments (helical) span residues 4–24 (TAFAFVLAAYLIGSLSFAVIV), 53–73 (LAAALTLLGDGAKGWVAVALA), 86–106 (GIALCALAVLFGHMWPVFFGF), 116–136 (VGILFGINPWLALAALATWLF), 137–157 (MAFVVKISSLSAIVACVLAPV), and 160–180 (FFILGPHSVYFGTCIIIAIVV).

This sequence belongs to the PlsY family. In terms of assembly, probably interacts with PlsX.

It is found in the cell inner membrane. It carries out the reaction an acyl phosphate + sn-glycerol 3-phosphate = a 1-acyl-sn-glycero-3-phosphate + phosphate. The protein operates within lipid metabolism; phospholipid metabolism. Catalyzes the transfer of an acyl group from acyl-phosphate (acyl-PO(4)) to glycerol-3-phosphate (G3P) to form lysophosphatidic acid (LPA). This enzyme utilizes acyl-phosphate as fatty acyl donor, but not acyl-CoA or acyl-ACP. The polypeptide is Glycerol-3-phosphate acyltransferase (Chromobacterium violaceum (strain ATCC 12472 / DSM 30191 / JCM 1249 / CCUG 213 / NBRC 12614 / NCIMB 9131 / NCTC 9757 / MK)).